Consider the following 79-residue polypeptide: U-actitoxin-Avd8a (79 aa).

A signal peptide spans 1–19 (MKSLVIVFVVLLGVAMISA). The propeptide occupies 20-36 (NEEELLAILQDQRNDAR).

This sequence belongs to the sea anemone 8 toxin family.

The protein localises to the secreted. Its subcellular location is the nematocyst. This chain is U-actitoxin-Avd8a, found in Anemonia viridis (Snakelocks anemone).